Here is a 259-residue protein sequence, read N- to C-terminus: MSLDLVHFPNYKKTFFGSSFQSDTLALLTRIRDEIGCRYVTHTYRGRVGDCTKVNSADLTVLMTLPATWVARYSSKNYFAIDPVFQEDAPYYRNDTSAIARDLKEDADICPAVAELLHDAEKHGLGNLFIAVSARNPKGVAGCTVFTFEVEDEDRTQFLARMRPRLLSLAGIIHGTVCGCKDANSVASLLTPREVDCLRWAANGKTDGEIAEILSIARWTVVTYLQNAKIKLNCSNRTSAVATALSLGIIDMPEVQHLV.

The segment at 76 to 179 (KNYFAIDPVF…AGIIHGTVCG (104 aa)) is C12-HSL binding. The HTH luxR-type domain occupies 183-248 (ANSVASLLTP…SAVATALSLG (66 aa)). The H-T-H motif DNA-binding region spans 207–226 (DGEIAEILSIARWTVVTYLQ).

Functionally, transcriptional regulator involved in the global control of Brucella gene expression. Mediates the effects of the quorum sensing autoinducer C12-HSL (N-dodecanoyl-homoserine lactone) on a large and diverse number of genes. This Brucella suis biovar 1 (strain 1330) protein is HTH-type quorum sensing-dependent transcriptional regulator VjbR (vjbR).